A 505-amino-acid polypeptide reads, in one-letter code: Protein FAM114A2 (505 aa).

The disordered stretch occupies residues 1-65; the sequence is MSDKDDIETP…KPSSDLETSK (65 aa). Residues 51-63 are compositionally biased toward basic and acidic residues; the sequence is KRPETKPSSDLET. 3 positions are modified to phosphoserine: serine 87, serine 146, and serine 209. Positions 268–295 form a coiled coil; the sequence is LNSLSGEELETLKVELEQLKETFSLAEF. The tract at residues 342 to 366 is disordered; that stretch reads KSLTKPLAENEEGEKQSEAENTEQV.

It belongs to the FAM114 family.

The sequence is that of Protein FAM114A2 (FAM114A2) from Homo sapiens (Human).